Here is a 345-residue protein sequence, read N- to C-terminus: Phosphate acyltransferase (345 aa).

The protein belongs to the PlsX family. As to quaternary structure, homodimer. Probably interacts with PlsY.

It is found in the cytoplasm. It catalyses the reaction a fatty acyl-[ACP] + phosphate = an acyl phosphate + holo-[ACP]. It functions in the pathway lipid metabolism; phospholipid metabolism. Catalyzes the reversible formation of acyl-phosphate (acyl-PO(4)) from acyl-[acyl-carrier-protein] (acyl-ACP). This enzyme utilizes acyl-ACP as fatty acyl donor, but not acyl-CoA. The chain is Phosphate acyltransferase from Levilactobacillus brevis (strain ATCC 367 / BCRC 12310 / CIP 105137 / JCM 1170 / LMG 11437 / NCIMB 947 / NCTC 947) (Lactobacillus brevis).